The primary structure comprises 120 residues: Anti-adapter protein IraM (120 aa).

The protein belongs to the IraM/RssC family.

The protein resides in the cytoplasm. Involved in the stabilization of the sigma stress factor RpoS. This chain is Anti-adapter protein IraM, found in Salmonella typhimurium (strain LT2 / SGSC1412 / ATCC 700720).